The sequence spans 653 residues: ATP-dependent zinc metalloprotease FtsH 1 (653 aa).

Topologically, residues 1-8 are cytoplasmic; that stretch reads MAENKWLR. A helical membrane pass occupies residues 9-29; the sequence is NGFVWIVLIIAVVALWVTFMK. The Extracellular segment spans residues 30–110; sequence DGGSAREENF…RVNPASQWGN (81 aa). A helical membrane pass occupies residues 111–131; the sequence is WLSALTFILPTLFLIGIVIFM. At 132-653 the chain is on the cytoplasmic side; the sequence is MRQAQGTNNQ…SPTMRPQPAS (522 aa). Position 203 to 210 (203 to 210) interacts with ATP; it reads GPPGTGKT. Residue His-425 participates in Zn(2+) binding. Glu-426 is an active-site residue. Residues His-429 and Asp-501 each coordinate Zn(2+). A disordered region spans residues 604–653; sequence EPRPRPQLVGPPVTRPAALAHKTEEADRGGERSPHPQPHPSPTMRPQPAS. Residues 624–637 are compositionally biased toward basic and acidic residues; the sequence is HKTEEADRGGERSP. The segment covering 638–653 has biased composition (pro residues); it reads HPQPHPSPTMRPQPAS.

In the central section; belongs to the AAA ATPase family. It in the C-terminal section; belongs to the peptidase M41 family. In terms of assembly, homohexamer. It depends on Zn(2+) as a cofactor.

The protein resides in the cell membrane. Functionally, acts as a processive, ATP-dependent zinc metallopeptidase for both cytoplasmic and membrane proteins. Plays a role in the quality control of integral membrane proteins. The polypeptide is ATP-dependent zinc metalloprotease FtsH 1 (Sphaerobacter thermophilus (strain ATCC 49802 / DSM 20745 / KCCM 41009 / NCIMB 13125 / S 6022)).